The chain runs to 358 residues: B3 domain-containing protein Os12g0592300 (358 aa).

Positions 25–122 (RIRFFRLMTG…SFDVLIFDAS (98 aa)) form a DNA-binding region, TF-B3 1. Residues 148 to 215 (YHLSDSEDTS…EKSDDDDEHA (68 aa)) form a disordered region. Polar residues predominate over residues 156 to 181 (TSTPSTFLVGSPHKASTSKKLNGKTK). Positions 203 to 215 (IEEEKSDDDDEHA) are enriched in acidic residues. Positions 252-350 (FVTVLQAPQI…TMTVHVIGKV (99 aa)) form a DNA-binding region, TF-B3 2.

Its subcellular location is the nucleus. The polypeptide is B3 domain-containing protein Os12g0592300 (Oryza sativa subsp. japonica (Rice)).